The chain runs to 210 residues: Proteasome subunit beta 2 (210 aa).

Residues 1–12 constitute a propeptide, removed in mature form; by autocatalysis; it reads MSNNVEEKILHG. Residue T13 is the Nucleophile of the active site.

It belongs to the peptidase T1B family. In terms of assembly, the 20S proteasome core is composed of 14 alpha and 14 beta subunits that assemble into four stacked heptameric rings, resulting in a barrel-shaped structure. The two inner rings, each composed of seven catalytic beta subunits, are sandwiched by two outer rings, each composed of seven alpha subunits. The catalytic chamber with the active sites is on the inside of the barrel. Has a gated structure, the ends of the cylinder being occluded by the N-termini of the alpha-subunits. Is capped at one or both ends by the proteasome regulatory ATPase, PAN.

It localises to the cytoplasm. It catalyses the reaction Cleavage of peptide bonds with very broad specificity.. With respect to regulation, the formation of the proteasomal ATPase PAN-20S proteasome complex, via the docking of the C-termini of PAN into the intersubunit pockets in the alpha-rings, triggers opening of the gate for substrate entry. Interconversion between the open-gate and close-gate conformations leads to a dynamic regulation of the 20S proteasome proteolysis activity. Component of the proteasome core, a large protease complex with broad specificity involved in protein degradation. This Cenarchaeum symbiosum (strain A) protein is Proteasome subunit beta 2.